The chain runs to 139 residues: Ribonuclease P protein component (139 aa).

Residues 116 to 139 form a disordered region; sequence FSKNKSTIGGEYSPKNEQCESELP.

The protein belongs to the RnpA family. As to quaternary structure, consists of a catalytic RNA component (M1 or rnpB) and a protein subunit.

The catalysed reaction is Endonucleolytic cleavage of RNA, removing 5'-extranucleotides from tRNA precursor.. Its function is as follows. RNaseP catalyzes the removal of the 5'-leader sequence from pre-tRNA to produce the mature 5'-terminus. It can also cleave other RNA substrates such as 4.5S RNA. The protein component plays an auxiliary but essential role in vivo by binding to the 5'-leader sequence and broadening the substrate specificity of the ribozyme. The sequence is that of Ribonuclease P protein component from Chlamydia abortus (strain DSM 27085 / S26/3) (Chlamydophila abortus).